The primary structure comprises 87 residues: Translation initiation factor IF-1 2 (87 aa).

An S1-like domain is found at 1–72 (MAKEELIELN…TKGRINFRHK (72 aa)). The interval 66–87 (RINFRHKDERSGPPSRPPQHRR) is disordered.

It belongs to the IF-1 family. Component of the 30S ribosomal translation pre-initiation complex which assembles on the 30S ribosome in the order IF-2 and IF-3, IF-1 and N-formylmethionyl-tRNA(fMet); mRNA recruitment can occur at any time during PIC assembly.

It localises to the cytoplasm. Its function is as follows. One of the essential components for the initiation of protein synthesis. Stabilizes the binding of IF-2 and IF-3 on the 30S subunit to which N-formylmethionyl-tRNA(fMet) subsequently binds. Helps modulate mRNA selection, yielding the 30S pre-initiation complex (PIC). Upon addition of the 50S ribosomal subunit IF-1, IF-2 and IF-3 are released leaving the mature 70S translation initiation complex. The sequence is that of Translation initiation factor IF-1 2 from Bordetella parapertussis (strain 12822 / ATCC BAA-587 / NCTC 13253).